The sequence spans 951 residues: PE-PGRS family protein PE_PGRS3 (951 aa).

Residues 4–94 (VIAAPEVIAA…GAYAAAEAAA (91 aa)) enclose the PE domain. Basic residues predominate over residues 887–919 (CRRQRRADRQRRQRRQRRQSRGHARCRRHRRAA). A disordered region spans residues 887–951 (CRRQRRADRQ…GISCSPQMMP (65 aa)).

This sequence belongs to the mycobacterial PE family. PGRS subfamily.

It localises to the cell outer membrane. It is found in the secreted. The protein localises to the cell wall. The protein resides in the cell surface. In terms of biological role, the arginine-rich C-terminal region protrudes from the mycobacterial membrane and mediates M.tuberculosis entry into host epithelial cells. May serve as a bridge between mycobacteria and host cells by interacting with specific host phospholipids and extracting them from host cells, for their direct integration or as a source of phosphate, during phases of TB pathogenesis when M.tuberculosis is short of phosphate supply. The polypeptide is PE-PGRS family protein PE_PGRS3 (PE_PGRS3) (Mycobacterium tuberculosis (strain CDC 1551 / Oshkosh)).